The primary structure comprises 356 residues: MKFKLLTINPGSTSTKIAVFENEKEILSETLRHSSKELEAYKNIYEQFEFRKDTILKVLKDKNFNIQNIDAVVGRGGLLKPIVGGTYKVNEKMLKDLKAGVQGEHASNLGGIIANSIAEAFGVSAYIVDPVVVDEMEDIARFSGIPELPRKSIFHALNQKAVAKRYAKESERDYEDLNIIVAHMGGGVSVGAHKNGKIIDVNNALDGEGAFSPERSGNLPSGDLVRLCFSGKYTEDEILKKITGKGGFVAYHGTNNALDVQNAALEGDYDAKMTYNAMGYQVAKDIGSAAAVLDGKVDCIILTGGIAYNKLMTDFIAKKVSFIAPITIYPGEDEMLALAEGTLRVLSGQEEAKKYK.

This sequence belongs to the acetokinase family. In terms of assembly, homodimer.

The protein resides in the cytoplasm. It carries out the reaction butanoate + ATP = butanoyl phosphate + ADP. Its pathway is lipid metabolism; butanoate metabolism. In terms of biological role, catalyzes the conversion of butyryl-CoA through butyryl phosphate to butyrate. The protein is Butyrate kinase 2 (buk2) of Clostridium acetobutylicum (strain ATCC 824 / DSM 792 / JCM 1419 / IAM 19013 / LMG 5710 / NBRC 13948 / NRRL B-527 / VKM B-1787 / 2291 / W).